Consider the following 387-residue polypeptide: Pepsin-3 (387 aa).

The first 15 residues, 1-15 (MKWLLLLGLLALSEC), serve as a signal peptide directing secretion. Positions 16 to 59 (IIHKVPLVRKKSLRKNLIEKGLLKDYLKTHTPNLATKYLPKAAF) are cleaved as a propeptide — activation peptide. The Peptidase A1 domain maps to 75–384 (YFGTIGIGTP…DRANNQLGLA (310 aa)). Aspartate 93 is a catalytic residue. 2 disulfide bridges follow: cysteine 106-cysteine 111 and cysteine 267-cysteine 271. Residue aspartate 276 is part of the active site. Cysteine 310 and cysteine 343 are disulfide-bonded.

This sequence belongs to the peptidase A1 family.

It is found in the secreted. It carries out the reaction Preferential cleavage: hydrophobic, preferably aromatic, residues in P1 and P1' positions. Cleaves 1-Phe-|-Val-2, 4-Gln-|-His-5, 13-Glu-|-Ala-14, 14-Ala-|-Leu-15, 15-Leu-|-Tyr-16, 16-Tyr-|-Leu-17, 23-Gly-|-Phe-24, 24-Phe-|-Phe-25 and 25-Phe-|-Tyr-26 bonds in the B chain of insulin.. Functionally, shows particularly broad specificity; although bonds involving phenylalanine and leucine are preferred, many others are also cleaved to some extent. In Oryctolagus cuniculus (Rabbit), this protein is Pepsin-3.